The chain runs to 406 residues: Argininosuccinate synthase (406 aa).

Residues 12-20 and alanine 40 each bind ATP; that span reads AYSGGLDTS. Residues tyrosine 92 and serine 97 each contribute to the L-citrulline site. ATP is bound at residue glycine 122. L-aspartate contacts are provided by threonine 124, asparagine 128, and aspartate 129. Asparagine 128 serves as a coordination point for L-citrulline. L-citrulline-binding residues include arginine 132, serine 181, serine 190, glutamate 266, and tyrosine 278.

The protein belongs to the argininosuccinate synthase family. Type 1 subfamily. As to quaternary structure, homotetramer.

The protein resides in the cytoplasm. It carries out the reaction L-citrulline + L-aspartate + ATP = 2-(N(omega)-L-arginino)succinate + AMP + diphosphate + H(+). The protein operates within amino-acid biosynthesis; L-arginine biosynthesis; L-arginine from L-ornithine and carbamoyl phosphate: step 2/3. The polypeptide is Argininosuccinate synthase (Serratia proteamaculans (strain 568)).